A 568-amino-acid polypeptide reads, in one-letter code: Potassium-transporting ATPase potassium-binding subunit (568 aa).

Transmembrane regions (helical) follow at residues 7–27 (LLIT…GNII), 67–87 (YALA…TLLV), 137–157 (GLTV…FALI), 180–200 (LYLL…QGVI), 258–278 (FIQI…FGQV), 288–308 (LLWA…YAEL), 332–352 (FGIL…CGAV), 361–381 (ALGG…FGGV), 384–404 (GLYG…LMIG), 421–441 (MVAL…ALTI), 488–508 (LLLA…VLAI), and 535–555 (LLIL…LILG).

It belongs to the KdpA family. In terms of assembly, the system is composed of three essential subunits: KdpA, KdpB and KdpC.

The protein localises to the cell inner membrane. Functionally, part of the high-affinity ATP-driven potassium transport (or Kdp) system, which catalyzes the hydrolysis of ATP coupled with the electrogenic transport of potassium into the cytoplasm. This subunit binds the periplasmic potassium ions and delivers the ions to the membrane domain of KdpB through an intramembrane tunnel. In Photorhabdus laumondii subsp. laumondii (strain DSM 15139 / CIP 105565 / TT01) (Photorhabdus luminescens subsp. laumondii), this protein is Potassium-transporting ATPase potassium-binding subunit.